The chain runs to 317 residues: Taste receptor type 2 member 7 (317 aa).

Residues 1-9 lie on the Extracellular side of the membrane; sequence MTDKVQTTL. Residues 10–30 traverse the membrane as a helical segment; that stretch reads LFLAIGEFSVGILGNAFIGLV. Residues 31-55 are Cytoplasmic-facing; sequence NCMDWVKKRKIASIDLILTSLAISR. A helical membrane pass occupies residues 56-76; that stretch reads ICLLCVILLDCFMLVLYPDVY. At 77 to 94 the chain is on the extracellular side; the sequence is ATGKQMRIIDFFWTLTNH. Residues 95–115 form a helical membrane-spanning segment; that stretch reads LSIWFATCLSIYYFFKIANFF. Topologically, residues 116 to 128 are cytoplasmic; that stretch reads HPLFLWMKWRIDR. Residues 129–149 form a helical membrane-spanning segment; that stretch reads VISWILLGCMVLSVFINLPAT. Residues 150-187 are Extracellular-facing; that stretch reads ENLNADFRRCVKAKRKTNLTWSCRVTKAQHASTKLFLN. N-linked (GlcNAc...) asparagine glycosylation is present at asparagine 167. A helical transmembrane segment spans residues 188 to 208; the sequence is LVTLLPFSVCLVSFFLLILSL. The Cytoplasmic segment spans residues 209-235; that stretch reads WRHIRRMQLSATGCRDPSTEAHVRALK. The chain crosses the membrane as a helical span at residues 236–256; that stretch reads AVISFLFLFIAYYLSFLIATS. The Extracellular portion of the chain corresponds to 257-266; the sequence is SYFIPETELA. The helical transmembrane segment at 267–287 threads the bilayer; that stretch reads VIFGEFIALIYPSSHSFILIL. The Cytoplasmic portion of the chain corresponds to 288–317; that stretch reads GNNKLRRASLKVLWTVMSILKGRKFQQKQI.

This sequence belongs to the G-protein coupled receptor T2R family.

The protein resides in the membrane. Gustducin-coupled receptor implicated in the perception of bitter compounds in the oral cavity and the gastrointestinal tract. Signals through PLCB2 and the calcium-regulated cation channel TRPM5. The protein is Taste receptor type 2 member 7 (TAS2R7) of Papio hamadryas (Hamadryas baboon).